Reading from the N-terminus, the 563-residue chain is Lipoprotein LpqB (563 aa).

A signal peptide spans 1–19; that stretch reads MRRMKALTAAMTAALLVSG. A lipid anchor (N-palmitoyl cysteine) is attached at Cys20. Cys20 carries the S-diacylglycerol cysteine lipid modification.

It belongs to the LpqB lipoprotein family.

The protein localises to the cell membrane. The polypeptide is Lipoprotein LpqB (Corynebacterium efficiens (strain DSM 44549 / YS-314 / AJ 12310 / JCM 11189 / NBRC 100395)).